The sequence spans 66 residues: Beta-toxin ChFII.7 (66 aa).

The region spanning K1–N66 is the LCN-type CS-alpha/beta domain. Cystine bridges form between C12-C65, C16-C41, C25-C46, and C29-C48. An Asparagine amide modification is found at N66.

Expressed by the venom gland.

It is found in the secreted. In terms of biological role, beta toxins bind voltage independently at site-4 of sodium channels (Nav) and shift the activation voltage toward more negative potentials, thereby affecting sodium channel activation CC and promoting spontaneous and repetitive firing. The chain is Beta-toxin ChFII.7 from Centruroides hirsutipalpus (Scorpion).